Reading from the N-terminus, the 408-residue chain is uncharacterized protein (408 aa).

Over residues 376-386 the composition is skewed to polar residues; that stretch reads NELNDPNSVYN. The tract at residues 376-408 is disordered; that stretch reads NELNDPNSVYNSPEFDHQGDQKKLTEENGCVVQ. Residues 389–401 are compositionally biased toward basic and acidic residues; the sequence is EFDHQGDQKKLTE.

This is an uncharacterized protein from Acanthamoeba polyphaga (Amoeba).